The primary structure comprises 130 residues: Protein ApaG (130 aa).

The 125-residue stretch at 3–127 (SAVTRGIEVT…FSLDVPEQRR (125 aa)) folds into the ApaG domain.

This is Protein ApaG from Brucella suis biovar 1 (strain 1330).